Consider the following 382-residue polypeptide: ATP phosphoribosyltransferase regulatory subunit (382 aa).

Belongs to the class-II aminoacyl-tRNA synthetase family. HisZ subfamily. As to quaternary structure, heteromultimer composed of HisG and HisZ subunits.

The protein resides in the cytoplasm. It participates in amino-acid biosynthesis; L-histidine biosynthesis; L-histidine from 5-phospho-alpha-D-ribose 1-diphosphate: step 1/9. Required for the first step of histidine biosynthesis. May allow the feedback regulation of ATP phosphoribosyltransferase activity by histidine. The polypeptide is ATP phosphoribosyltransferase regulatory subunit (Acidovorax ebreus (strain TPSY) (Diaphorobacter sp. (strain TPSY))).